A 120-amino-acid polypeptide reads, in one-letter code: Ribonuclease P protein component (120 aa).

This sequence belongs to the RnpA family. Consists of a catalytic RNA component (M1 or rnpB) and a protein subunit.

It catalyses the reaction Endonucleolytic cleavage of RNA, removing 5'-extranucleotides from tRNA precursor.. Functionally, RNaseP catalyzes the removal of the 5'-leader sequence from pre-tRNA to produce the mature 5'-terminus. It can also cleave other RNA substrates such as 4.5S RNA. The protein component plays an auxiliary but essential role in vivo by binding to the 5'-leader sequence and broadening the substrate specificity of the ribozyme. This chain is Ribonuclease P protein component, found in Dictyoglomus thermophilum (strain ATCC 35947 / DSM 3960 / H-6-12).